The chain runs to 323 residues: Movement protein (323 aa).

Residues 292-322 (SLLENKDENLLRSMSTKIDTLGKKLSLIYDN) are a coiled coil.

Belongs to the caulimoviridae movement protein family. Homotrimer, through the coiled-coil domain. Interacts with VAP.

The protein resides in the host cell junction. Its subcellular location is the host plasmodesma. Transports viral genome to neighboring plant cells directly through plasmosdesmata, without any budding. The movement protein allows efficient cell to cell propagation, by bypassing the host cell wall barrier. Acts by forming tubules structures that increase the size exclusion limit (SEL) of plasmodesmata, thereby allowing viral ribonucleocapsids to spread directly to neighboring cells. The chain is Movement protein from Figwort mosaic virus (strain DxS) (FMV).